Consider the following 435-residue polypeptide: MASKSTVTTLTIFFFFFFFFIEPKVQSQQISAVDSECTNRWIHIRTLPSRFNLDLLSTCNRYPITDDLCPYLANHGLGPKTHTRTRSWYRTDPLLLELIFHRRILEYPCLTPDPNLASAIYLPYYAGIDSLRYLYGPDLNSSADHGSDLLEFLTRDQPEIWSRRSGHDHFLVMARPAWDFSQPLTVDPPIWGTSFLERREFFNLTALTLESRYWPWQEQAVPYPTSFHPHSLPFLESWIRRVRRSRRTSLMLFAGGGGTSSSPNIRRSIRLECTSINATQSDNKICDFVDCSNGICEHDPIRFMRPMLQSSFCLQPPGDTPTRKATFDGIIAGCIPVFFEDQTAKMQYKWHLPESEFAEFSVTIPKEDVVFRGVRIQDVLMSIPKEEVTRMRERVIEMMPRVMYRRHGASMGLMNKKDAVDIAIDGVLDRIISRV.

Topologically, residues 1–6 are cytoplasmic; the sequence is MASKST. The helical; Signal-anchor for type II membrane protein transmembrane segment at 7-23 threads the bilayer; the sequence is VTTLTIFFFFFFFFIEP. Residues 24-435 are Lumenal-facing; the sequence is KVQSQQISAV…GVLDRIISRV (412 aa). N-linked (GlcNAc...) asparagine glycosylation is found at N140, N203, and N277.

Belongs to the glycosyltransferase 47 family. Expressed in roots, hypocotyls, cotyledons, leaves, stems, stamens and pollen grains.

The protein resides in the golgi apparatus membrane. In terms of biological role, functions in xyloglucan synthesis by adding side chains to the xylosylated glucan backbone. Involved in the galactosylation of hemicellulose xyloglucan. The sequence is that of Probable xyloglucan galactosyltransferase GT19 from Arabidopsis thaliana (Mouse-ear cress).